The chain runs to 232 residues: Polycomb group RING finger protein 5-B (232 aa).

Residues 18 to 57 (CFVCKGYLIKPTTVTECLHTFCKSCIVQHFEDSNDCPKCG) form an RING-type zinc finger. Residues 93–104 (QEDEFWRRKESN) show a composition bias toward basic and acidic residues. The interval 93–128 (QEDEFWRRKESNDENGPMCKKRRVDEEDDDKGDGDY) is disordered.

Component of a PRC1-like complex.

The protein resides in the nucleus. Component of Polycomb group (PcG) multiprotein complexes; the complex class is required to maintain the transcriptionally repressive state of some genes. The protein is Polycomb group RING finger protein 5-B (pcgf5b) of Danio rerio (Zebrafish).